A 224-amino-acid polypeptide reads, in one-letter code: MSDYSKLEKCLDYQFKNKNLIIEALTHKSFKKPYNNERLEFLGDAVLNLIVGEYLYLKFPKSNEGELSKIRASLVNETGFTRLANEIKLGEYIFISTAEERNKGRTKASILSDAFEAIMGAIYLESGLNTLKPIILRILEESYDKINLDVLFSDYKTALQEITQARFASIPEYKIEGSYGPDHKKEFEVSIWIDGKNYGKASGKSKKLAQQAAAKIAIDKLKEE.

In terms of domain architecture, RNase III spans 4–127 (YSKLEKCLDY…IMGAIYLESG (124 aa)). Residue glutamate 40 coordinates Mg(2+). The active site involves aspartate 44. Mg(2+)-binding residues include aspartate 113 and glutamate 116. Glutamate 116 is a catalytic residue. In terms of domain architecture, DRBM spans 154–223 (DYKTALQEIT…AKIAIDKLKE (70 aa)).

The protein belongs to the ribonuclease III family. As to quaternary structure, homodimer. Mg(2+) is required as a cofactor.

It is found in the cytoplasm. The enzyme catalyses Endonucleolytic cleavage to 5'-phosphomonoester.. Digests double-stranded RNA. Involved in the processing of primary rRNA transcript to yield the immediate precursors to the large and small rRNAs (23S and 16S). Processes some mRNAs, and tRNAs when they are encoded in the rRNA operon. Processes pre-crRNA and tracrRNA of type II CRISPR loci if present in the organism. The chain is Ribonuclease 3 from Aliarcobacter butzleri (strain RM4018) (Arcobacter butzleri).